Reading from the N-terminus, the 436-residue chain is Mitochondrial substrate carrier family protein Y (436 aa).

The tract at residues 1-102 (MENNNKNINT…NINNNNINKK (102 aa)) is disordered. Topologically, residues 1–137 (MENNNKNINT…GGFLAGLSRN (137 aa)) are mitochondrial intermembrane. 2 Solcar repeats span residues 135 to 226 (SRNV…TLKY) and 236 to 334 (HDTL…LKKQ). A helical membrane pass occupies residues 138–158 (VTRIIGSFSSGMAEESAGYPL). At 159–194 (DLIKTRIQLSQSGVSGGGGTNTSIIKIFKDVIKTEG) the chain is on the mitochondrial matrix side. The chain crosses the membrane as a helical span at residues 195–215 (VIGLFKGLSSPLILSALVTAI). Over 216–238 (QFGLFEDTLKYFRKHQYFKNHDT) the chain is Mitochondrial intermembrane. Residues 239–259 (LSLLFSGSIAGFAQSFITCPV) form a helical membrane-spanning segment. The Mitochondrial matrix segment spans residues 260–313 (DLVKIQMQIQGIPSSQPNSNNNNNNNKAKGNSYFTKLIYREKGLLGFYQGLSPT). A helical membrane pass occupies residues 314–334 (LFRDVPGLAIFFTTYETLKKQ). The Mitochondrial intermembrane portion of the chain corresponds to 335 to 347 (FGQPELSTQSPTE). A helical membrane pass occupies residues 348-368 (FIKSFIPIVLSGGSAGVFYHG). Residues 350–436 (KSFIPIVLSG…FLVYEMVINL (87 aa)) form a Solcar 3 repeat. The Mitochondrial matrix segment spans residues 369-413 (LTHPFDIAKTLIQSDRSATKYKGTFDCLKQVYQNQGPKSLFKGFS). The chain crosses the membrane as a helical span at residues 414-434 (AVAIKSFQSNAVGFLVYEMVI). The Mitochondrial intermembrane segment spans residues 435-436 (NL).

This sequence belongs to the mitochondrial carrier (TC 2.A.29) family.

Its subcellular location is the mitochondrion inner membrane. Its function is as follows. Mitochondrial solute carriers shuttle metabolites, nucleotides, and cofactors through the mitochondrial inner membrane. The chain is Mitochondrial substrate carrier family protein Y (mcfY) from Dictyostelium discoideum (Social amoeba).